The sequence spans 263 residues: 3-methyl-2-oxobutanoate hydroxymethyltransferase (263 aa).

Positions 45 and 84 each coordinate Mg(2+). 3-methyl-2-oxobutanoate contacts are provided by residues 45–46 (DS), Asp84, and Lys112. Glu114 is a Mg(2+) binding site. The active-site Proton acceptor is Glu180.

The protein belongs to the PanB family. As to quaternary structure, homodecamer; pentamer of dimers. It depends on Mg(2+) as a cofactor.

The protein resides in the cytoplasm. It catalyses the reaction 3-methyl-2-oxobutanoate + (6R)-5,10-methylene-5,6,7,8-tetrahydrofolate + H2O = 2-dehydropantoate + (6S)-5,6,7,8-tetrahydrofolate. It participates in cofactor biosynthesis; (R)-pantothenate biosynthesis; (R)-pantoate from 3-methyl-2-oxobutanoate: step 1/2. In terms of biological role, catalyzes the reversible reaction in which hydroxymethyl group from 5,10-methylenetetrahydrofolate is transferred onto alpha-ketoisovalerate to form ketopantoate. In Salmonella paratyphi C (strain RKS4594), this protein is 3-methyl-2-oxobutanoate hydroxymethyltransferase.